The primary structure comprises 324 residues: Aspartate carbamoyltransferase catalytic subunit (324 aa).

Positions 65 and 66 each coordinate carbamoyl phosphate. Position 93 (Lys93) interacts with L-aspartate. Carbamoyl phosphate is bound by residues Arg115, His145, and Gln148. Arg178 and Arg233 together coordinate L-aspartate. Residues Gly274 and Pro275 each coordinate carbamoyl phosphate.

This sequence belongs to the aspartate/ornithine carbamoyltransferase superfamily. ATCase family. As to quaternary structure, heterododecamer (2C3:3R2) of six catalytic PyrB chains organized as two trimers (C3), and six regulatory PyrI chains organized as three dimers (R2).

It catalyses the reaction carbamoyl phosphate + L-aspartate = N-carbamoyl-L-aspartate + phosphate + H(+). Its pathway is pyrimidine metabolism; UMP biosynthesis via de novo pathway; (S)-dihydroorotate from bicarbonate: step 2/3. Functionally, catalyzes the condensation of carbamoyl phosphate and aspartate to form carbamoyl aspartate and inorganic phosphate, the committed step in the de novo pyrimidine nucleotide biosynthesis pathway. This is Aspartate carbamoyltransferase catalytic subunit from Nitrosococcus oceani (strain ATCC 19707 / BCRC 17464 / JCM 30415 / NCIMB 11848 / C-107).